The chain runs to 340 residues: Putative esterase YheT (340 aa).

An AB hydrolase-1 domain is found at 73–312 (PRLVVFHGLE…TEHGGHVGFI (240 aa)). Residues S153, D280, and H308 each act as charge relay system in the active site.

This sequence belongs to the AB hydrolase superfamily. AB hydrolase 4 family.

The polypeptide is Putative esterase YheT (yheT) (Escherichia coli (strain K12)).